An 814-amino-acid chain; its full sequence is Telomere repeats-binding bouquet formation protein 1 (814 aa).

ARM repeat units lie at residues 93–136 and 327–368; these read EMFR…KTSR and GGLP…GMST. Disordered stretches follow at residues 461 to 521, 551 to 584, and 653 to 753; these read DQDS…ELKR, STPT…LSDD, and FRRS…KRQN. Positions 488–512 form a coiled coil; the sequence is EKSKKRKHKQKRENERSDNQETRRE. Composition is skewed to basic and acidic residues over residues 499-521, 565-577, and 679-688; these read RENE…ELKR, IFRH…RNQR, and EHSTSAQEHK. The segment covering 689–699 has biased composition (basic residues); sequence QKSKREKHKLS. Residues 714–741 are compositionally biased toward basic and acidic residues; sequence RPRETYSPDVKQWTDHRHLKKSSEDARS. Positions 746–799 constitute a Myb-like domain; that stretch reads GRHRKRQNWSDKELCYLTKGVKRFGHSWNTILWKYPFHPGRTNVDLAKKFYHMQ.

Belongs to the TERB1 family. Component of the MAJIN-TERB1-TERB2 complex.

It is found in the chromosome. The protein localises to the telomere. The protein resides in the nucleus inner membrane. In terms of biological role, meiosis-specific telomere-associated protein involved in meiotic telomere attachment to the nucleus inner membrane, a crucial step for homologous pairing and synapsis. Component of the MAJIN-TERB1-TERB2 complex, which promotes telomere cap exchange by mediating attachment of telomeric DNA to the inner nuclear membrane and replacement of the protective cap of telomeric chromosomes: in early meiosis, the MAJIN-TERB1-TERB2 complex associates with telomeric DNA and the shelterin/telosome complex. During prophase, the complex matures and promotes release of the shelterin/telosome complex from telomeric DNA. In the MAJIN-TERB1-TERB2 complex, TERB1 probably mediates association with the shelterin/telosome complex. This chain is Telomere repeats-binding bouquet formation protein 1 (ccdc79), found in Danio rerio (Zebrafish).